The sequence spans 181 residues: Mitochondrial inner membrane protein Mpv17 (181 aa).

Helical transmembrane passes span 20-38 (VIVS…QYLT), 48-70 (TARF…FRVL), 91-113 (FMFS…GFSF), and 140-162 (LINF…AFFW).

Belongs to the peroxisomal membrane protein PXMP2/4 family.

It is found in the mitochondrion inner membrane. Its function is as follows. Involved in mitochondria homeostasis. In Caenorhabditis briggsae, this protein is Mitochondrial inner membrane protein Mpv17.